Reading from the N-terminus, the 342-residue chain is Ketol-acid reductoisomerase (NADP(+)) (342 aa).

A KARI N-terminal Rossmann domain is found at 2–182 (AKIYYDDDAD…GGLRAGGIET (181 aa)). Residues 25 to 28 (YGSQ), Arg48, Ser51, Ser53, and 83 to 86 (DQNQ) contribute to the NADP(+) site. His108 is a catalytic residue. Gly134 is a binding site for NADP(+). The 146-residue stretch at 183–328 (SFREETETDL…KELRKMYSWL (146 aa)) folds into the KARI C-terminal knotted domain. Mg(2+)-binding residues include Asp191, Glu195, Glu227, and Glu231. Ser252 contributes to the substrate binding site.

The protein belongs to the ketol-acid reductoisomerase family. Mg(2+) serves as cofactor.

It catalyses the reaction (2R)-2,3-dihydroxy-3-methylbutanoate + NADP(+) = (2S)-2-acetolactate + NADPH + H(+). The catalysed reaction is (2R,3R)-2,3-dihydroxy-3-methylpentanoate + NADP(+) = (S)-2-ethyl-2-hydroxy-3-oxobutanoate + NADPH + H(+). It participates in amino-acid biosynthesis; L-isoleucine biosynthesis; L-isoleucine from 2-oxobutanoate: step 2/4. Its pathway is amino-acid biosynthesis; L-valine biosynthesis; L-valine from pyruvate: step 2/4. Its function is as follows. Involved in the biosynthesis of branched-chain amino acids (BCAA). Catalyzes an alkyl-migration followed by a ketol-acid reduction of (S)-2-acetolactate (S2AL) to yield (R)-2,3-dihydroxy-isovalerate. In the isomerase reaction, S2AL is rearranged via a Mg-dependent methyl migration to produce 3-hydroxy-3-methyl-2-ketobutyrate (HMKB). In the reductase reaction, this 2-ketoacid undergoes a metal-dependent reduction by NADPH to yield (R)-2,3-dihydroxy-isovalerate. The polypeptide is Ketol-acid reductoisomerase (NADP(+)) (Cutibacterium acnes (strain DSM 16379 / KPA171202) (Propionibacterium acnes)).